The chain runs to 254 residues: tRNA (guanine-N(1)-)-methyltransferase (254 aa).

Residues Gly115 and 135–140 (VGDFVL) contribute to the S-adenosyl-L-methionine site.

This sequence belongs to the RNA methyltransferase TrmD family. Homodimer.

It localises to the cytoplasm. It carries out the reaction guanosine(37) in tRNA + S-adenosyl-L-methionine = N(1)-methylguanosine(37) in tRNA + S-adenosyl-L-homocysteine + H(+). Its function is as follows. Specifically methylates guanosine-37 in various tRNAs. In Francisella tularensis subsp. tularensis (strain FSC 198), this protein is tRNA (guanine-N(1)-)-methyltransferase.